The primary structure comprises 460 residues: T-box transcription factor TBX1 (460 aa).

Disordered stretches follow at residues 30 to 53 (LNTP…ESQF) and 67 to 99 (GSNS…TLVK). Over residues 67 to 84 (GSNSAQAPAQGDSGTSNC) the composition is skewed to polar residues. The segment at residues 116 to 294 (LWDEFNQLGT…SNPFAKGFRD (179 aa)) is a DNA-binding region (T-box). 2 disordered regions span residues 317–355 (RTRN…DPTH) and 376–400 (PLTA…PDTL). Residues 320-330 (NPMSSPPQQNG) show a composition bias toward polar residues. The segment covering 331-344 (TEKEDSRREYDRDP) has biased composition (basic and acidic residues). The Nuclear localization signal motif lies at 418-429 (KTRPSPYPSPSI).

Binds DNA as a dimer. As to expression, expressed in the ear and mesendodermal components of pharyngeal arches.

It localises to the nucleus. Functionally, probable transcriptional regulator involved in developmental processes. Binds to the palindromic T site 5'-TTCACACCTAGGTGTGAA-3' DNA sequence. Is required for normal development of the pharyngeal arch arteries. Acts cell autonomously in the pharyngeal mesendoderm and influences the development of neural crest-derived cartilages secondarily. In Danio rerio (Zebrafish), this protein is T-box transcription factor TBX1 (tbx1).